A 1116-amino-acid polypeptide reads, in one-letter code: Disease resistance protein RGA5 (1116 aa).

A structured coiled coil (CC) domain region spans residues 1-177 (MDAPASFSLG…HHGVSANLVG (177 aa)). The NB-ARC domain occupies 182-466 (KTKLNRWLSD…WSAEGFVSAN (285 aa)). LRR repeat units follow at residues 608-631 (LFQLRYLKTSGDVVVQLPAQISGL), 633-653 (YLETLEIDARVSAVPFDLVHL), 654-675 (PNLLHLQLQDETKLPDGIGCMR), 677-701 (LRTLQYFDLGNNSVDNLRGLGELTN), 732-755 (LSNLKSLILSPGAISMVIFFDISS), 786-808 (LHKLCILKVSVRELLTTDIDNLT), 810-830 (LPSLTVLSLYAQTAPEGRFIF), 835-857 (LPVLKYFKFGCGELCLAFMAGAM), and 858-882 (PNLQRLKLVFNIRKSEKYRHTLFGI). A disordered region spans residues 935 to 971 (EEESHPLEKQHHKREKGSSAGHGVLEKESVEDSEKNT). A compositionally biased stretch (basic and acidic residues) spans 958-971 (VLEKESVEDSEKNT). An HMA domain is found at 997–1066 (RTKIVVKVHM…KCGLAELLMV (70 aa)). The segment at 1000–1070 (IVVKVHMPCG…AELLMVELVE (71 aa)) is HMA-like domain.

The protein belongs to the disease resistance NB-LRR family. In terms of assembly, forms homodimer or heterodimer with RGA4 through its coiled coil (CC) domain. Interacts with AVR1-Pia and AVR-CO39 through its C-terminal part containing the HMA-like domain. As to expression, expressed in leaves.

The protein localises to the cytoplasm. In terms of biological role, disease resistance (R) protein that recognizes the AVR-Pia and AVR1-CO39 effector avirulence proteins from M.oryzae. Resistance proteins guard the plant against pathogens that contain an appropriate avirulence protein via an indirect interaction with this avirulence protein. That triggers a defense system including the hypersensitive response, which restricts the pathogen growth. Contribution of RGA4 is required to recognize the effector avirulence proteins AVR-Pia and AVR1-CO39 from M.oryzae. Acts as a repressor of the RGA4-mediated cell death activation. Upon infection, recognition and binding of the AVR effectors relieve the RGA5-mediated repression and triggers the hypersensitive response. Immune response triggered by the RGA4-RGA5 -mediated recognition of AVR1-CO39 confers resistance to X.oryzae pathovars. The polypeptide is Disease resistance protein RGA5 (Oryza sativa subsp. japonica (Rice)).